A 42-amino-acid chain; its full sequence is Photosystem I reaction center subunit IX (42 aa).

Residues 7-27 (YLSTAPVLATIWFIILAGLLI) form a helical membrane-spanning segment.

Belongs to the PsaJ family.

Its subcellular location is the plastid. It is found in the chloroplast thylakoid membrane. Its function is as follows. May help in the organization of the PsaE and PsaF subunits. In Mesostigma viride (Green alga), this protein is Photosystem I reaction center subunit IX.